A 221-amino-acid polypeptide reads, in one-letter code: Interleukin-12 subunit alpha (221 aa).

Residues 1-25 (MCPLRSLLLISTLVLLHHLPHLSLG) form the signal peptide. 3 disulfides stabilise this stretch: Cys-39/Cys-112, Cys-66/Cys-198, and Cys-87/Cys-125. N-linked (GlcNAc...) asparagine glycosylation is present at Asn-95.

This sequence belongs to the IL-6 superfamily. Heterodimer with IL12B; disulfide-linked. This heterodimer is known as interleukin IL-12. Heterodimer with EBI3/IL27B; not disulfide-linked. This heterodimer is known as interleukin IL-35. Interacts with NBR1; this interaction promotes IL-12 secretion.

The protein resides in the secreted. Its function is as follows. Heterodimerizes with IL12B to form the IL-12 cytokine or with EBI3/IL27B to form the IL-35 cytokine. IL-12 is primarily produced by professional antigen-presenting cells (APCs) such as B-cells and dendritic cells (DCs) as well as macrophages and granulocytes and regulates T-cell and natural killer-cell responses, induces the production of interferon-gamma (IFN-gamma), favors the differentiation of T-helper 1 (Th1) cells and is an important link between innate resistance and adaptive immunity. Mechanistically, exerts its biological effects through a receptor composed of IL12R1 and IL12R2 subunits. Binding to the receptor results in the rapid tyrosine phosphorylation of a number of cellular substrates including the JAK family kinases TYK2 and JAK2. In turn, recruited STAT4 gets phosphorylated and translocates to the nucleus where it regulates cytokine/growth factor responsive genes. As part of IL-35, plays essential roles in maintaining the immune homeostasis of the liver microenvironment and also functions as an immune-suppressive cytokine. Mediates biological events through unconventional receptors composed of IL12RB2 and gp130/IL6ST heterodimers or homodimers. Signaling requires the transcription factors STAT1 and STAT4, which form a unique heterodimer that binds to distinct DNA sites. The polypeptide is Interleukin-12 subunit alpha (IL12A) (Bos taurus (Bovine)).